We begin with the raw amino-acid sequence, 378 residues long: Enoyl-[acyl-carrier-protein] reductase 1, mitochondrial (378 aa).

Tyr59 acts as the Proton donor in catalysis. NADP(+) contacts are provided by residues Asn151, Asn180–Val183, Arg203–Lys206, Tyr284–Met287, Tyr309–Leu311, and Lys372.

The protein belongs to the zinc-containing alcohol dehydrogenase family. Quinone oxidoreductase subfamily. As to quaternary structure, homodimer.

It is found in the mitochondrion matrix. It carries out the reaction a 2,3-saturated acyl-[ACP] + NADP(+) = a (2E)-enoyl-[ACP] + NADPH + H(+). Its function is as follows. Catalyzes the NADPH-dependent reduction of trans-2-enoyl thioesters in mitochondrial fatty acid synthesis (fatty acid synthesis type II). Fatty acid chain elongation in mitochondria uses acyl carrier protein (ACP) as an acyl group carrier, but the enzyme accepts both ACP and CoA thioesters as substrates in vitro. Required for respiration and the maintenance of the mitochondrial compartment. In Debaryomyces hansenii (strain ATCC 36239 / CBS 767 / BCRC 21394 / JCM 1990 / NBRC 0083 / IGC 2968) (Yeast), this protein is Enoyl-[acyl-carrier-protein] reductase 1, mitochondrial (ETR1).